The chain runs to 292 residues: Syntaxin-19 (292 aa).

Residues 1 to 24 (MKDRLPELKQRTKETELSKDKDVP) show a composition bias toward basic and acidic residues. The disordered stretch occupies residues 1–28 (MKDRLPELKQRTKETELSKDKDVPTTEA). Residues 46–122 (VAERHLHEIQ…VKEVKKSEDE (77 aa)) are a coiled coil. One can recognise a t-SNARE coiled-coil homology domain in the interval 209 to 271 (LSEIEQRHKE…NTTKEKFGLA (63 aa)).

This sequence belongs to the syntaxin family. Interacts with EGFR.

The protein resides in the cell membrane. Its subcellular location is the cytoplasm. In terms of biological role, plays a role in endosomal trafficking of the epidermal growth factor receptor (EGFR). The protein is Syntaxin-19 (STX19) of Bos taurus (Bovine).